A 144-amino-acid chain; its full sequence is MNLNTLSPDPGSRPSRRRVGRGIGSGLGKTCGKGHKGQKSRAGGYHKINFEGGQMPIQRRLPKMGFKSRVGRTIDEVSLGELAKLNDEVIDLVALRKAGLINNSIKDVKVILSGELTAAIKLKGLRVTKGARSAIESLGGSIEE.

The tract at residues 1 to 45 is disordered; that stretch reads MNLNTLSPDPGSRPSRRRVGRGIGSGLGKTCGKGHKGQKSRAGGY. Positions 21-31 are enriched in gly residues; it reads RGIGSGLGKTC.

The protein belongs to the universal ribosomal protein uL15 family. Part of the 50S ribosomal subunit.

Functionally, binds to the 23S rRNA. The chain is Large ribosomal subunit protein uL15 from Legionella pneumophila (strain Paris).